We begin with the raw amino-acid sequence, 477 residues long: MSSRGYEAVIGIEIHVQLSTKTKIFSSESTAFEAGDNENTSPVSVGMPGTLPVLNSKVVEYSIKTGLALGCDIRRKSVFARKNYFYPDLPKGYQISQYDQPICENGSITFKVDGKEKTVSITRAHMEEDAGKSNHHGEYTLINYNRSGIPLLEVVSGPDMRTPQEAAEYARTIRQIVRYLDVCDGNLEEGSLRCDCNVSVRKEGAKQFGTKVEIKNINSFRFVEKAIEYEIERQIDCVERGDKIIQETRLWDPDKNRTFSMRAKEDAQDYRYFPDPDLQPVIVTDSMIEKYKKELPELPIARAQRFQDDHALPELDATVLTTEKDLADFYEDTAKESKNFKASSNWIMTELLRELNSANKNIKDSPIKPAQLGKMIAMIDKGTISGKIAKTIFQEMWASGNDPEVIMKEKGLVQISDPAAIEKLVDEVLAANAQTVEDHKSGKKKNLFGFFVGAVMKASKGQANPDLVNKILLEKLK.

Belongs to the GatB/GatE family. GatB subfamily. In terms of assembly, heterotrimer of A, B and C subunits.

It carries out the reaction L-glutamyl-tRNA(Gln) + L-glutamine + ATP + H2O = L-glutaminyl-tRNA(Gln) + L-glutamate + ADP + phosphate + H(+). The catalysed reaction is L-aspartyl-tRNA(Asn) + L-glutamine + ATP + H2O = L-asparaginyl-tRNA(Asn) + L-glutamate + ADP + phosphate + 2 H(+). Allows the formation of correctly charged Asn-tRNA(Asn) or Gln-tRNA(Gln) through the transamidation of misacylated Asp-tRNA(Asn) or Glu-tRNA(Gln) in organisms which lack either or both of asparaginyl-tRNA or glutaminyl-tRNA synthetases. The reaction takes place in the presence of glutamine and ATP through an activated phospho-Asp-tRNA(Asn) or phospho-Glu-tRNA(Gln). In Bdellovibrio bacteriovorus (strain ATCC 15356 / DSM 50701 / NCIMB 9529 / HD100), this protein is Aspartyl/glutamyl-tRNA(Asn/Gln) amidotransferase subunit B.